Consider the following 611-residue polypeptide: Alkyldihydroxyacetonephosphate synthase (611 aa).

One can recognise an FAD-binding PCMH-type domain in the interval 137-317 (VKNAPDLIVL…TEAVMKVHAV (181 aa)). FAD is bound by residues 169-175 (PMGGGSN), 237-243 (DSFEFST), 250-255 (TCSSGH), and 301-307 (EGTLGII). Arg-447 is a binding site for substrate. The Proton donor/acceptor role is filled by Tyr-508. The tract at residues 544-546 (HHH) is important for enzyme activity. Positions 609–611 (PKL) match the Microbody targeting signal motif.

This sequence belongs to the FAD-binding oxidoreductase/transferase type 4 family. As to quaternary structure, homodimer. It depends on FAD as a cofactor.

The protein localises to the peroxisome. The enzyme catalyses a long chain fatty alcohol + a 1-acylglycerone 3-phosphate = a 1-O-alkylglycerone 3-phosphate + a long-chain fatty acid + H(+). It participates in glycerolipid metabolism; ether lipid biosynthesis. Functionally, catalyzes the exchange of an acyl for a long-chain alkyl group and the formation of the ether bond in the biosynthesis of ether phospholipids. In Dictyostelium discoideum (Social amoeba), this protein is Alkyldihydroxyacetonephosphate synthase (eapA).